Consider the following 463-residue polypeptide: tRNA-2-methylthio-N(6)-dimethylallyladenosine synthase (463 aa).

Residues 5–125 (RKLHIKSYGC…LPQLLAKAEQ (121 aa)) form the MTTase N-terminal domain. The [4Fe-4S] cluster site is built by C14, C50, C88, C166, C170, and C173. The region spanning 152–384 (RARGISAFVT…QQLIDQQQSA (233 aa)) is the Radical SAM core domain. Residues 387 to 449 (KAAIGRTVEV…RYSLLGELAS (63 aa)) form the TRAM domain.

This sequence belongs to the methylthiotransferase family. MiaB subfamily. As to quaternary structure, monomer. [4Fe-4S] cluster serves as cofactor.

The protein localises to the cytoplasm. The enzyme catalyses N(6)-dimethylallyladenosine(37) in tRNA + (sulfur carrier)-SH + AH2 + 2 S-adenosyl-L-methionine = 2-methylsulfanyl-N(6)-dimethylallyladenosine(37) in tRNA + (sulfur carrier)-H + 5'-deoxyadenosine + L-methionine + A + S-adenosyl-L-homocysteine + 2 H(+). Catalyzes the methylthiolation of N6-(dimethylallyl)adenosine (i(6)A), leading to the formation of 2-methylthio-N6-(dimethylallyl)adenosine (ms(2)i(6)A) at position 37 in tRNAs that read codons beginning with uridine. The chain is tRNA-2-methylthio-N(6)-dimethylallyladenosine synthase from Rhodopseudomonas palustris (strain ATCC BAA-98 / CGA009).